Here is an 878-residue protein sequence, read N- to C-terminus: Enoyl-CoA isomerase/hydratase claC (878 aa).

The segment at 541-561 (VGPASTEATSPVVEPSTMESD) is disordered. Residues 677 to 681 (AGADL) and G724 each bind substrate.

It belongs to the enoyl-CoA hydratase/isomerase family.

The protein operates within secondary metabolite biosynthesis. Enoyl-CoA isomerase/hydratase; part of the cla gene cluster that produces clavatol and ortho-quinone methide. The clavatol biosynthesis cluster cla and the terrestric acid cluster tra are both involved in the production of peniphenones and penilactones. The non-reducing PKS claF is responsible for the formation of clavatol from successive condensations of 3 malonyl-CoA units, presumably with a simple acetyl-CoA starter unit, and 2 methylation steps. The esterase claE probably collaborates with claF by catalyzing the hydrolysis of ACP-bound acyl intermediates to free the ACP from stalled intermediates. The clavatol oxidase claD then converts clavatol to hydroxyclavatol. Spontaneous dehydration of hydroxyclavatol leads to the accumulation of the highly active ortho-quinone methide. On the other hand, the PKS-NRPS hybrid traA is involved in the formation of crustosic acid, with the help of traB and traD. The polyketide synthase module (PKS) of traA is responsible for the synthesis of the polyketide backbone via the condensation of an acetyl-CoA starter unit with 3 malonyl-CoA units. The downstream nonribosomal peptide synthetase (NRPS) module then amidates the carboxyl end of the polyketide with L-malic acid. Because traA lacks a designated enoylreductase (ER) domain, the required activity is provided the enoyl reductase traG. Crustosic acid undergoes decarboxylation and isomerization to the terrestric acid, catalyzed by the 2-oxoglutarate-dependent dioxygenase traH. Both acids are further converted to the 2 gamma-butyrolactones (R)-5-methyltetronic acid and (S)-5-carboxylmethyltetronic acid, with involvement of the cytochrome P450 monooxygenase claJ. Spontaneous addition of the methide to these gamma-butyrolactones leads to peniphenone D and penilactone D, which undergo again stereospecific attacking by methide to give penilactones A and B. The function of the enoyl-CoA isomerase/hydratase claC has not been investigated yet. The polypeptide is Enoyl-CoA isomerase/hydratase claC (Penicillium crustosum (Blue mold fungus)).